The primary structure comprises 97 residues: MEQAPEDQGPQREPHNEWTLELLEELKREAVRHFPRPWLHGLGQHIYETYGDTWAGVEAIIRILQQLLFIHFRIGCQHSRIGIIQQRRARRNGASRS.

Positions 1–42 (MEQAPEDQGPQREPHNEWTLELLEELKREAVRHFPRPWLHGL) are homooligomerization. 3 positions are modified to phosphoserine; by host: Ser-79, Ser-95, and Ser-97.

It belongs to the HIV-1 VPR protein family. Homooligomer, may form homodimer. Interacts with p6-gag region of the Pr55 Gag precursor protein through a (Leu-X-X)4 motif near the C-terminus of the P6gag protein. Interacts with host UNG. May interact with host RAD23A/HHR23A. Interacts with host VPRBP/DCAF1, leading to hijack the CUL4A-RBX1-DDB1-DCAF1/VPRBP complex, mediating ubiquitination of host proteins such as TERT and ZGPAT and arrest of the cell cycle in G2 phase. Post-translationally, phosphorylated on several residues by host. These phosphorylations regulate VPR activity for the nuclear import of the HIV-1 pre-integration complex.

It is found in the virion. It localises to the host nucleus. Its subcellular location is the host extracellular space. Its function is as follows. During virus replication, may deplete host UNG protein, and incude G2-M cell cycle arrest. Acts by targeting specific host proteins for degradation by the 26S proteasome, through association with the cellular CUL4A-DDB1 E3 ligase complex by direct interaction with host VPRPB/DCAF-1. Cell cycle arrest reportedly occurs within hours of infection and is not blocked by antiviral agents, suggesting that it is initiated by the VPR carried into the virion. Additionally, VPR induces apoptosis in a cell cycle dependent manner suggesting that these two effects are mechanistically linked. Detected in the serum and cerebrospinal fluid of AIDS patient, VPR may also induce cell death to bystander cells. During virus entry, plays a role in the transport of the viral pre-integration (PIC) complex to the host nucleus. This function is crucial for viral infection of non-dividing macrophages. May act directly at the nuclear pore complex, by binding nucleoporins phenylalanine-glycine (FG)-repeat regions. This Human immunodeficiency virus type 1 group M subtype B (isolate YU-2) (HIV-1) protein is Protein Vpr.